The following is a 417-amino-acid chain: GTP-binding protein YPT11 (417 aa).

The disordered stretch occupies residues 1 to 34; the sequence is MSQRKRYSLNVVTSPSIPSPTPSAPIRTNESNWE. GTP-binding positions include 97-104, 228-232, and 292-295; these read GDANVGKT, DTAGQ, and NKID. Residues cysteine 415 and cysteine 416 are each lipidated (S-geranylgeranyl cysteine).

The protein belongs to the small GTPase superfamily. Rab family. In terms of assembly, interacts with MYO2 (via C-terminal tail domain). Interacts with YIF1, YIP3, YIP4 and YIP5.

It is found in the endoplasmic reticulum membrane. It localises to the bud tip. The protein resides in the bud neck. Functionally, involved in the positive control of both endoplasmic reticulum (ER) and mitochondrion inheritance during cell divison. Required for the MYO2-dependent retention of newly inherited mitochondria at the bud tip in developing daughter cells. This is GTP-binding protein YPT11 (YPT11) from Saccharomyces cerevisiae (strain YJM789) (Baker's yeast).